A 104-amino-acid polypeptide reads, in one-letter code: Ribonuclease P protein component 4 (104 aa).

4 residues coordinate Zn(2+): Cys-63, Cys-66, Cys-89, and Cys-92.

Belongs to the eukaryotic/archaeal RNase P protein component 4 family. Consists of a catalytic RNA component and at least 4-5 protein subunits. It depends on Zn(2+) as a cofactor.

The protein localises to the cytoplasm. The catalysed reaction is Endonucleolytic cleavage of RNA, removing 5'-extranucleotides from tRNA precursor.. Its function is as follows. Part of ribonuclease P, a protein complex that generates mature tRNA molecules by cleaving their 5'-ends. The chain is Ribonuclease P protein component 4 from Methanoregula boonei (strain DSM 21154 / JCM 14090 / 6A8).